A 176-amino-acid chain; its full sequence is 3-hydroxyanthranilate 3,4-dioxygenase (176 aa).

Residue arginine 44 coordinates O2. Fe cation contacts are provided by histidine 48, glutamate 54, and histidine 92. Substrate is bound at residue glutamate 54. 2 residues coordinate substrate: arginine 96 and glutamate 106. Residues cysteine 121, cysteine 124, cysteine 158, and cysteine 161 each coordinate Fe cation.

Belongs to the 3-HAO family. As to quaternary structure, homodimer. The cofactor is Fe(2+).

The enzyme catalyses 3-hydroxyanthranilate + O2 = (2Z,4Z)-2-amino-3-carboxymuconate 6-semialdehyde. Its pathway is cofactor biosynthesis; NAD(+) biosynthesis; quinolinate from L-kynurenine: step 3/3. Its function is as follows. Catalyzes the oxidative ring opening of 3-hydroxyanthranilate to 2-amino-3-carboxymuconate semialdehyde, which spontaneously cyclizes to quinolinate. The protein is 3-hydroxyanthranilate 3,4-dioxygenase of Xanthomonas oryzae pv. oryzae (strain MAFF 311018).